The following is a 397-amino-acid chain: Na(+)/H(+) antiporter NhaA 3 (397 aa).

The next 11 helical transmembrane spans lie at 18-38 (AGGILLIVAAALAMLLANSPF), 63-83 (LLLWTNDGLMAVFFLLVGLEL), 98-118 (IALPAVGAIGGMLVPALIYWW), 129-149 (GWAIPAATDIAFALGVLALLG), 158-178 (IFLTSIAVFDDIGAILIIAFF), 181-201 (SKISMLALVVAAICCAILFIC), 207-224 (TTLRAYLLIGLVMWVALL), 269-289 (VAFLILPIFAFANSGIRFIGM), 306-326 (LFFGKQLGVFLFCGVCVLFGW), 340-360 (GVAVLCGIGFTMSLFIGSLAF), and 373-393 (LGIVFGSLVSAVLGFVVLRSA).

It belongs to the NhaA Na(+)/H(+) (TC 2.A.33) antiporter family.

It localises to the cell inner membrane. It carries out the reaction Na(+)(in) + 2 H(+)(out) = Na(+)(out) + 2 H(+)(in). In terms of biological role, na(+)/H(+) antiporter that extrudes sodium in exchange for external protons. The protein is Na(+)/H(+) antiporter NhaA 3 of Saccharophagus degradans (strain 2-40 / ATCC 43961 / DSM 17024).